The primary structure comprises 280 residues: Large ribosomal subunit protein uL2 (280 aa).

Residues 223–280 form a disordered region; it reads VVMNPVDHPHGGGEGRTSGGRHPVTPWGKPTKGARTRNKNKASSKLIIRSRHAKKKGR. Positions 254–280 are enriched in basic residues; the sequence is KGARTRNKNKASSKLIIRSRHAKKKGR.

It belongs to the universal ribosomal protein uL2 family. In terms of assembly, part of the 50S ribosomal subunit. Forms a bridge to the 30S subunit in the 70S ribosome.

Its function is as follows. One of the primary rRNA binding proteins. Required for association of the 30S and 50S subunits to form the 70S ribosome, for tRNA binding and peptide bond formation. It has been suggested to have peptidyltransferase activity; this is somewhat controversial. Makes several contacts with the 16S rRNA in the 70S ribosome. The sequence is that of Large ribosomal subunit protein uL2 from Dinoroseobacter shibae (strain DSM 16493 / NCIMB 14021 / DFL 12).